We begin with the raw amino-acid sequence, 718 residues long: Heat shock 70 kDa protein 7, chloroplastic (718 aa).

The N-terminal 92 residues, 1-92 (MASSAAQIHI…IDLGTTNSAV (92 aa)), are a transit peptide targeting the chloroplast. The segment covering 668–678 (QIGQSLYNQPQ) has biased composition (polar residues). The interval 668–718 (QIGQSLYNQPQPGGADSPPGGEASSSSDTSSSAKGGDNGGDVIDADFTDSN) is disordered.

The protein belongs to the heat shock protein 70 (TC 1.A.33) family. DnaK subfamily.

Its subcellular location is the plastid. It localises to the chloroplast stroma. Functionally, acts redundantly with HSP70-6 in the thermotolerance of germinating seeds. Plays an important role in the protein precursor import into chloroplasts. In cooperation with other chaperones, Hsp70s are key components that facilitate folding of de novo synthesized proteins, assist translocation of precursor proteins into organelles, and are responsible for degradation of damaged protein under stress conditions. The polypeptide is Heat shock 70 kDa protein 7, chloroplastic (HSP70-7) (Arabidopsis thaliana (Mouse-ear cress)).